The primary structure comprises 783 residues: MEEELKCPVCGSLFREPIILPCSHNVCLPCARTIAVQTPDGEQHLPQPLLLSRGSGLQAGAAAAASLEHDAAAGPACGGAGGSAAGGLGGGAGGGGDHADKLSLYSETDSGYGSYTPSLKSPNGVRVLPMVPAPPGSSAAAARGAACSSLSSSSSSITCPQCHRSASLDHRGLRGFQRNRLLEAIVQRYQQGRGAVPGTSAAAAVAICQLCDRTPPEPAATLCEQCDVLYCSACQLKCHPSRGPFAKHRLVQPPPPPPPPAEAASGPTGTAQGAPSGGGGCKSPGGAGAGATGGSTARKFPTCPEHEMENYSMYCVSCRTPVCYLCLEEGRHAKHEVKPLGAMWKQHKAQLSQALNGVSDKAKEAKEFLVQLKNILQQIQENGLDYEACLVAQCDALVDALTRQKAKLLTKVTKEREHKLKMVWDQINHCTLKLRQSTGLMEYCLEVIKENDPSGFLQISDALIKRVQVSQEQWVKGALEPKVSAEFDLTLDSEPLLQAIHQLDFIQMKCRVPPVPLLQLEKCCTRNNSVTLAWRMPPFTHSPVDGYILELDDGAGGQFREVYVGKETLCTIDGLHFNSTYNARVKAFNSSGVGPYSKTVVLQTSDVAWFTFDPNSGHRDIILSNDNQTATCSSYDDRVVLGTAAFSKGVHYWELHVDRYDNHPDPAFGVARASVVKDMMLGKDDKAWAMYVDNNRSWFMHCNSHTNRTEGGVCKGATVGVLLDLNKHTLTFFINGQQQGPTAFSHVDGVFMPALSLNRNVQVTLHTGLEVPTNLGRPKLSGN.

The RING-type; degenerate zinc-finger motif lies at 7–42; sequence CPVCGSLFREPIILPCSHNVCLPCARTIAVQTPDGE. The segment at 206-253 adopts a B box-type 1; degenerate zinc-finger fold; sequence AICQLCDRTPPEPAATLCEQCDVLYCSACQLKCHPSRGPFAKHRLVQP. Positions 247 to 295 are disordered; it reads KHRLVQPPPPPPPPAEAASGPTGTAQGAPSGGGGCKSPGGAGAGATGGS. Residues 252 to 261 show a composition bias toward pro residues; the sequence is QPPPPPPPPA. Gly residues predominate over residues 275 to 293; that stretch reads PSGGGGCKSPGGAGAGATG. The B box-type 2 zinc-finger motif lies at 298–340; sequence RKFPTCPEHEMENYSMYCVSCRTPVCYLCLEEGRHAKHEVKPL. The Zn(2+) site is built by cysteine 303, histidine 306, cysteine 326, and histidine 332. A coiled-coil region spans residues 345–382; that stretch reads KQHKAQLSQALNGVSDKAKEAKEFLVQLKNILQQIQEN. A COS domain is found at 448-506; that stretch reads IKENDPSGFLQISDALIKRVQVSQEQWVKGALEPKVSAEFDLTLDSEPLLQAIHQLDFI. In terms of domain architecture, Fibronectin type-III spans 513 to 607; sequence PPVPLLQLEK…KTVVLQTSDV (95 aa). Residues 589–780 enclose the B30.2/SPRY domain; the sequence is NSSGVGPYSK…VPTNLGRPKL (192 aa).

The protein belongs to the TRIM/RBCC family.

It localises to the cytoplasm. Its subcellular location is the cytoskeleton. This chain is Tripartite motif-containing protein 67 (TRIM67), found in Homo sapiens (Human).